A 365-amino-acid chain; its full sequence is DNA replication and repair protein RecF (365 aa).

30-37 (GPNGSGKT) lines the ATP pocket.

This sequence belongs to the RecF family.

The protein resides in the cytoplasm. In terms of biological role, the RecF protein is involved in DNA metabolism; it is required for DNA replication and normal SOS inducibility. RecF binds preferentially to single-stranded, linear DNA. It also seems to bind ATP. In Azotobacter vinelandii (strain DJ / ATCC BAA-1303), this protein is DNA replication and repair protein RecF.